The chain runs to 555 residues: Cytochrome P450 78A11 (555 aa).

The chain crosses the membrane as a helical span at residues 12–32; it reads VDATWWAYALPALLGADTLCA. A heme-binding site is contributed by Cys-495.

Belongs to the cytochrome P450 family. Heme serves as cofactor. Expressed in seedlings, shoot apices and young panicles, but not in mature leaves, calli and roots.

The protein resides in the membrane. Its function is as follows. Involved in the regular timing (plastochron) of lateral organs formation. May regulate the rate of leaf initiation and the duration of vegetative phase. Seems to be redundant to the function of PLASTOCHRON2, but to act in an independent pathway. The polypeptide is Cytochrome P450 78A11 (CYP78A11) (Oryza sativa subsp. japonica (Rice)).